A 418-amino-acid polypeptide reads, in one-letter code: Histidine--tRNA ligase (418 aa).

It belongs to the class-II aminoacyl-tRNA synthetase family.

The protein resides in the cytoplasm. The catalysed reaction is tRNA(His) + L-histidine + ATP = L-histidyl-tRNA(His) + AMP + diphosphate + H(+). The chain is Histidine--tRNA ligase from Methanococcus aeolicus (strain ATCC BAA-1280 / DSM 17508 / OCM 812 / Nankai-3).